Here is a 441-residue protein sequence, read N- to C-terminus: MTSSTTTRSEALFERARAVTPGGVNSPVRAFKSVGGVPRFIREAHGAYLTDMDDTRYVDYIGSWGPMILGHDHPTIREAIATALTGGTSFGAPGEREVELAELVTRLTGAGRVRFVNSGTEATMSALRLARGFTGRKFIVKFRGNYHGHADGLLVEAGSGLLTNAEGVLGSAAPSSAGVPEEYASLTLVSEYNDPAALDALMRLRGHEVAAVIFEPVVGNAGVLVPTPDFLEALHRVKASGALLVADEVMTGFRLSLNGATGLLGLEPDLTCWGKIIGGGLPVGAYGGRADVMDFVSPQGPVYQAGTLSGNPLAMAAGLATLQTLEADPGIYGRLEAYTAALASGLRAAADEAGVPVSINRVGSMLTAFHQDVPDGSIRTYADAARSDTTGFATWFQGMLARGVYWAPSQFESIFVSGAHTDRELNVTLEAARSAYGGTPV.

At lysine 275 the chain carries N6-(pyridoxal phosphate)lysine.

It belongs to the class-III pyridoxal-phosphate-dependent aminotransferase family. HemL subfamily. Homodimer. Pyridoxal 5'-phosphate is required as a cofactor.

It localises to the cytoplasm. It carries out the reaction (S)-4-amino-5-oxopentanoate = 5-aminolevulinate. The protein operates within porphyrin-containing compound metabolism; protoporphyrin-IX biosynthesis; 5-aminolevulinate from L-glutamyl-tRNA(Glu): step 2/2. This chain is Glutamate-1-semialdehyde 2,1-aminomutase, found in Deinococcus deserti (strain DSM 17065 / CIP 109153 / LMG 22923 / VCD115).